We begin with the raw amino-acid sequence, 261 residues long: Monensin polyketide synthase putative ketoacyl reductase (261 aa).

10 to 34 (LVTGATSGIGLATARLLAAQGHLVF) is a binding site for NAD(+). Serine 144 is a binding site for substrate. Tyrosine 157 (proton acceptor) is an active-site residue.

The protein belongs to the short-chain dehydrogenases/reductases (SDR) family.

It functions in the pathway antifungal biosynthesis; monensin biosynthesis. This chain is Monensin polyketide synthase putative ketoacyl reductase, found in Streptomyces virginiae (Streptomyces cinnamonensis).